The primary structure comprises 833 residues: Translation initiation factor IF-2 (833 aa).

Positions 1-247 are disordered; sequence MTEDVKKADG…ALQQAFTKPA (247 aa). Composition is skewed to basic and acidic residues over residues 53 to 99 and 110 to 152; these read QKAE…EAKK and VDVE…RYAE. Over residues 153–166 the composition is skewed to acidic residues; the sequence is LSEEDAENENSEDY. The segment covering 187 to 203 has biased composition (basic residues); sequence KENRNRGGKNKVAKAKK. Residues 204–227 are compositionally biased toward basic and acidic residues; that stretch reads GGREDESSKTERESNRRNQKDGKM. Residues 333–502 form the tr-type G domain; that stretch reads TRAPVVTIMG…LLQSEVLELT (170 aa). The segment at 342-349 is G1; that stretch reads GHVDHGKT. 342-349 lines the GTP pocket; that stretch reads GHVDHGKT. A G2 region spans residues 367–371; it reads GITQH. The segment at 388–391 is G3; the sequence is DTPG. GTP-binding positions include 388–392 and 442–445; these read DTPGH and NKID. Residues 442 to 445 are G4; it reads NKID. Positions 478 to 480 are G5; that stretch reads SAK.

This sequence belongs to the TRAFAC class translation factor GTPase superfamily. Classic translation factor GTPase family. IF-2 subfamily.

Its subcellular location is the cytoplasm. One of the essential components for the initiation of protein synthesis. Protects formylmethionyl-tRNA from spontaneous hydrolysis and promotes its binding to the 30S ribosomal subunits. Also involved in the hydrolysis of GTP during the formation of the 70S ribosomal complex. In Pasteurella multocida (strain Pm70), this protein is Translation initiation factor IF-2 (infB).